A 179-amino-acid chain; its full sequence is UPF0167 protein PA1536 (179 aa).

It belongs to the UPF0167 family.

The sequence is that of UPF0167 protein PA1536 from Pseudomonas aeruginosa (strain ATCC 15692 / DSM 22644 / CIP 104116 / JCM 14847 / LMG 12228 / 1C / PRS 101 / PAO1).